The sequence spans 974 residues: Protein bicaudal C homolog 1 (974 aa).

Residues M1–R50 are disordered. Phosphoserine occurs at positions 26, 31, and 43. KH domains follow at residues R132 to I199 and P284 to L348. Residue K398 is modified to N6-acetyllysine. 3 positions are modified to phosphoserine: S576, S612, and S679. 3 disordered regions span residues V593–K644, G665–P719, and Y783–E846. The span at S602 to E619 shows a compositional bias: polar residues. Positions L690–E703 are enriched in basic and acidic residues. The 64-residue stretch at F873 to N936 folds into the SAM domain.

It belongs to the BicC family. In terms of assembly, interacts (via KH domains) with ANKS6 (via SAM domain) in an RNA-dependent manner. Interacts with ANKS3.

The protein localises to the cytoplasm. Functionally, putative RNA-binding protein. Acts as a negative regulator of Wnt signaling. May be involved in regulating gene expression during embryonic development. This is Protein bicaudal C homolog 1 (BICC1) from Homo sapiens (Human).